Reading from the N-terminus, the 709-residue chain is Leucine-rich repeat-containing protein 4B (709 aa).

An N-terminal signal peptide occupies residues 1–38 (MAQAHIQGSPCPLLPPGRMSWPQGALLLLWLFSPPLRA). An LRRNT domain is found at 50–88 (GGGSPPATSCPAACSCSNQASRVICTRRELAEVPASIPV). LRR repeat units lie at residues 89 to 110 (NTRY…TFKH), 113 to 134 (HLEI…AFNG), 137 to 158 (SLNT…AFEY), 161 to 182 (KLRE…AFNR), 185 to 207 (SLRR…AFEG), 210 to 231 (NLRY…TALV), 232 to 253 (RLEE…SFQG), 256 to 277 (SLRK…AFDD), and 280 to 301 (SLEE…LFTP). The 53-residue stretch at 313–365 (NPWHCNCDVLWLSWWLKETVPSNTTCCARCHAPAGLKGRYIGELDQSHFTCYA) folds into the LRRCT domain. Positions 366-454 (PVIVEPPTDL…GNTTASATLN (89 aa)) constitute an Ig-like C2-type domain. 5 N-linked (GlcNAc...) asparagine glycosylation sites follow: Asn-376, Asn-402, Asn-424, Asn-427, and Asn-446. Cysteines 387 and 438 form a disulfide. The disordered stretch occupies residues 496 to 552 (TQPGEEAQQPRGTEKEPPGPTTDGAWGGGRPDAAAPASASTTAPAPRSSRPTEKAFT). Positions 528 to 544 (AAAPASASTTAPAPRSS) are enriched in low complexity. Residues 575–595 (IIIGCFVAITFMAAVMLVAFY) traverse the membrane as a helical segment. A Phosphoserine modification is found at Ser-689.

In terms of assembly, interacts with PTPRF. Interacts with DLG4. Post-translationally, N-glycosylated. O-glycosylated; contains sialic acid. As to expression, mainly expressed in the brain. Widespread distribution in various brain regions (at protein level). Detected both embryonically and postnatally with stronger expression in postnatal stages.

Its subcellular location is the membrane. The protein localises to the presynaptic cell membrane. In terms of biological role, synaptic adhesion protein. Regulates the formation of excitatory synapses. The trans-synaptic adhesion between LRRC4B and PTPRF regulates the formation of excitatory synapses in a bidirectional manner. The polypeptide is Leucine-rich repeat-containing protein 4B (Lrrc4b) (Rattus norvegicus (Rat)).